Here is a 477-residue protein sequence, read N- to C-terminus: Aryl-phospho-beta-D-glucosidase BglC (477 aa).

Residue E170 is the Proton donor of the active site. The active-site Nucleophile is the E378.

Belongs to the glycosyl hydrolase 1 family.

It catalyses the reaction 6-phospho-beta-D-glucosyl-(1-&gt;4)-D-glucose + H2O = D-glucose 6-phosphate + D-glucose. Its function is as follows. Is able to catalyze the hydrolysis of aryl-phospho-beta-D-glucosides such as 4-methylumbelliferyl-phospho-beta-D-glucopyranoside (MUG-P), phosphoarbutin and phosphosalicin. Is not essential for growth on arbutin and salicin as the sole carbon source. This Bacillus subtilis (strain 168) protein is Aryl-phospho-beta-D-glucosidase BglC (bglC).